Consider the following 309-residue polypeptide: Zinc-finger homeodomain protein 5 (309 aa).

A compositionally biased stretch (basic and acidic residues) spans M1–N16. The interval M1–G21 is disordered. A ZF-HD dimerization-type; degenerate zinc finger spans residues Y76–E125. The segment at residues K240 to P303 is a DNA-binding region (homeobox).

Homo- and heterodimer with other ZFHD proteins. Interacts with MIF1, MIF2 and MIF3; these interactions prevent nuclear localization and DNA-binding to inhibit transcription regulation activity. Binds to ZHD1, ZHD2, ZHD4, ZHD10 and ZHD11. In terms of tissue distribution, mostly expressed in flowers and inflorescence.

It localises to the nucleus. Putative transcription factor. Binds DNA at 5'-ATTA-3' consensus promoter regions. Regulates floral architecture and leaf development. Regulators in the abscisic acid (ABA) signal pathway that confers sensitivity to ABA in an ARF2-dependent manner. This Arabidopsis thaliana (Mouse-ear cress) protein is Zinc-finger homeodomain protein 5 (ZHD5).